Here is a 197-residue protein sequence, read N- to C-terminus: Molybdenum cofactor guanylyltransferase (197 aa).

GTP is bound by residues 10–12 (LAG), Lys23, Asn51, Asp69, and Asp99. Residue Asp99 participates in Mg(2+) binding.

The protein belongs to the MobA family. In terms of assembly, monomer. Mg(2+) serves as cofactor.

The protein localises to the cytoplasm. The catalysed reaction is Mo-molybdopterin + GTP + H(+) = Mo-molybdopterin guanine dinucleotide + diphosphate. Its function is as follows. Transfers a GMP moiety from GTP to Mo-molybdopterin (Mo-MPT) cofactor (Moco or molybdenum cofactor) to form Mo-molybdopterin guanine dinucleotide (Mo-MGD) cofactor. This is Molybdenum cofactor guanylyltransferase from Shewanella sp. (strain MR-4).